The following is a 257-amino-acid chain: MSKLKLNDVNIYYGDFHAVQNVNLEVPARSVTAFIGPSGCGKSTVLRSINRMHEVTPGAYVKGEILLDGENIYGSKIDPVAVRNTIGMVFQKANPFPTMSIEDNVVAGLKLSGEKNKKKLKEVAEKSLRGANLWEEVKDRLDKPGGGLSGGQQQRLCIARAIAVEPEILLMDEPCSALDPISTLAVEDLIHELKEEFTIVIVTHNMQQAARVSDQTAFYSLEATGRPGRLVEIGPTKKIFENPDQKETEDYISGRFG.

The ABC transporter domain occupies 4-246 (LKLNDVNIYY…KKIFENPDQK (243 aa)). ATP is bound at residue 36-43 (GPSGCGKS).

Belongs to the ABC transporter superfamily. Phosphate importer (TC 3.A.1.7) family. In terms of assembly, the complex is composed of two ATP-binding proteins (PstB), two transmembrane proteins (PstC and PstA) and a solute-binding protein (PstS).

It localises to the cell membrane. The catalysed reaction is phosphate(out) + ATP + H2O = ADP + 2 phosphate(in) + H(+). In terms of biological role, part of the ABC transporter complex PstSACB involved in phosphate import. Responsible for energy coupling to the transport system. This Corynebacterium glutamicum (strain ATCC 13032 / DSM 20300 / JCM 1318 / BCRC 11384 / CCUG 27702 / LMG 3730 / NBRC 12168 / NCIMB 10025 / NRRL B-2784 / 534) protein is Phosphate import ATP-binding protein PstB.